Reading from the N-terminus, the 286-residue chain is Light-independent protochlorophyllide reductase iron-sulfur ATP-binding protein (286 aa).

Residues 10–15 (GIGKST) and Lys39 contribute to the ATP site. Residue Ser14 coordinates Mg(2+). Residues Cys95 and Cys129 each coordinate [4Fe-4S] cluster. 180-181 (NR) contacts ATP.

It belongs to the NifH/BchL/ChlL family. As to quaternary structure, homodimer. Protochlorophyllide reductase is composed of three subunits; ChlL, ChlN and ChlB. It depends on [4Fe-4S] cluster as a cofactor.

It catalyses the reaction chlorophyllide a + oxidized 2[4Fe-4S]-[ferredoxin] + 2 ADP + 2 phosphate = protochlorophyllide a + reduced 2[4Fe-4S]-[ferredoxin] + 2 ATP + 2 H2O. Its pathway is porphyrin-containing compound metabolism; chlorophyll biosynthesis (light-independent). In terms of biological role, component of the dark-operative protochlorophyllide reductase (DPOR) that uses Mg-ATP and reduced ferredoxin to reduce ring D of protochlorophyllide (Pchlide) to form chlorophyllide a (Chlide). This reaction is light-independent. The L component serves as a unique electron donor to the NB-component of the complex, and binds Mg-ATP. This is Light-independent protochlorophyllide reductase iron-sulfur ATP-binding protein from Leptolyngbya boryana (Plectonema boryanum).